The primary structure comprises 239 residues: Gag polyprotein (239 aa).

Residues 124-141 (KGEEVGETTAQRDAKMAP) show a composition bias toward basic and acidic residues. Residues 124 to 144 (KGEEVGETTAQRDAKMAPEKM) are disordered. The PPXY motif signature appears at 172–175 (PPPY). Residues 184-214 (LAGVGEQQGQGGDTPWGAEQPRAEPGHAGLA) are disordered.

Its subcellular location is the virion. The polypeptide is Gag polyprotein (ev-1) (Galliformes).